Reading from the N-terminus, the 324-residue chain is Beta-ketoacyl-[acyl-carrier-protein] synthase III (324 aa).

Catalysis depends on residues cysteine 114 and histidine 251. The interval 252 to 256 (QANRR) is ACP-binding. Asparagine 281 is an active-site residue.

This sequence belongs to the thiolase-like superfamily. FabH family. Homodimer.

Its subcellular location is the cytoplasm. It catalyses the reaction malonyl-[ACP] + acetyl-CoA + H(+) = 3-oxobutanoyl-[ACP] + CO2 + CoA. Its pathway is lipid metabolism; fatty acid biosynthesis. Catalyzes the condensation reaction of fatty acid synthesis by the addition to an acyl acceptor of two carbons from malonyl-ACP. Catalyzes the first condensation reaction which initiates fatty acid synthesis and may therefore play a role in governing the total rate of fatty acid production. Possesses both acetoacetyl-ACP synthase and acetyl transacylase activities. Its substrate specificity determines the biosynthesis of branched-chain and/or straight-chain of fatty acids. The polypeptide is Beta-ketoacyl-[acyl-carrier-protein] synthase III (Paramagnetospirillum magneticum (strain ATCC 700264 / AMB-1) (Magnetospirillum magneticum)).